The chain runs to 165 residues: 5-formyltetrahydrofolate cyclo-ligase (165 aa).

Position 4–8 (4–8 (KNSLR)) interacts with ATP. 2 residues coordinate substrate: I51 and E56. Position 116-124 (116-124 (RIGFGKGYY)) interacts with ATP. Residue D125 coordinates Mg(2+). Residues R126 and W154 each contribute to the ATP site. Position 155 (D155) interacts with Mg(2+).

The protein belongs to the 5-formyltetrahydrofolate cyclo-ligase family. As to quaternary structure, monomer or homodimer. The cofactor is Mg(2+).

Its subcellular location is the cytoplasm. It catalyses the reaction (6S)-5-formyl-5,6,7,8-tetrahydrofolate + ATP = (6R)-5,10-methenyltetrahydrofolate + ADP + phosphate. Involved in folate metabolism. Catalyzes the irreversible conversion of 5-formyltetrahydrofolate (5-FTHF) to yield 5,10-methenyltetrahydrofolate. The chain is 5-formyltetrahydrofolate cyclo-ligase from Mycoplasma genitalium (strain ATCC 33530 / DSM 19775 / NCTC 10195 / G37) (Mycoplasmoides genitalium).